The chain runs to 389 residues: Na(+)/H(+) antiporter NhaA 1 (389 aa).

11 helical membrane passes run 14 to 34, 47 to 67, 87 to 107, 117 to 137, 146 to 166, 171 to 191, 197 to 217, 252 to 272, 280 to 300, 321 to 341, and 356 to 376; these read AGGILLVIAAAIAMVIANSPL, FGMSVSHWINDGLMAIFFLLI, IFPAIAAVGGMLAPALIYVAF, GWAIPAATDIAFALGIMALLG, VFLLALAIIDDLGVVVIIALF, LSTLALTVGFAMTGVLFMLNA, LIWYIVVGFILWVAVLKSGVH, VAFAILPVFAFANAGISLEGV, MLPLGIALGLLVGKPLGIFTF, IFAVSVLCGIGFTMSIFISSL, and LGILMGSTTAAVLGYFLLHVS.

This sequence belongs to the NhaA Na(+)/H(+) (TC 2.A.33) antiporter family.

It localises to the cell inner membrane. It catalyses the reaction Na(+)(in) + 2 H(+)(out) = Na(+)(out) + 2 H(+)(in). Its function is as follows. Na(+)/H(+) antiporter that extrudes sodium in exchange for external protons. The sequence is that of Na(+)/H(+) antiporter NhaA 1 from Vibrio vulnificus (strain CMCP6).